Consider the following 156-residue polypeptide: Small ribosomal subunit protein uS7 (156 aa).

It belongs to the universal ribosomal protein uS7 family. Part of the 30S ribosomal subunit. Contacts proteins S9 and S11.

Functionally, one of the primary rRNA binding proteins, it binds directly to 16S rRNA where it nucleates assembly of the head domain of the 30S subunit. Is located at the subunit interface close to the decoding center, probably blocks exit of the E-site tRNA. The chain is Small ribosomal subunit protein uS7 from Shewanella halifaxensis (strain HAW-EB4).